Here is a 397-residue protein sequence, read N- to C-terminus: Pectate lyase 4 (397 aa).

Positions 1 to 25 (MGIKHCCYILYFTLALVTLVQAGRL) are cleaved as a signal peptide. N-linked (GlcNAc...) asparagine glycosylation occurs at asparagine 36. A disulfide bridge links cysteine 54 with cysteine 71. PbH1 repeat units follow at residues 159–202 (VKNV…HVTG), 203–224 (SSDI…VDVN), and 227–248 (STGV…LLGA). Ca(2+) contacts are provided by aspartate 194, aspartate 218, and aspartate 222. Arginine 274 is a catalytic residue.

It belongs to the polysaccharide lyase 1 family. Amb a subfamily. As to quaternary structure, monomer. Ca(2+) serves as cofactor. The N-terminus is blocked. As to expression, pollen and flowers.

It carries out the reaction Eliminative cleavage of (1-&gt;4)-alpha-D-galacturonan to give oligosaccharides with 4-deoxy-alpha-D-galact-4-enuronosyl groups at their non-reducing ends.. Its pathway is glycan metabolism; pectin degradation; 2-dehydro-3-deoxy-D-gluconate from pectin: step 2/5. Functionally, has pectate lyase activity. The chain is Pectate lyase 4 from Ambrosia artemisiifolia (Common ragweed).